Consider the following 201-residue polypeptide: LexA repressor (201 aa).

The segment at residues 28–48 (MRDIAAHLRISGTLGVSKHLT) is a DNA-binding region (H-T-H motif). Catalysis depends on for autocatalytic cleavage activity residues Ser-120 and Lys-157.

The protein belongs to the peptidase S24 family. Homodimer.

It catalyses the reaction Hydrolysis of Ala-|-Gly bond in repressor LexA.. Its function is as follows. Represses a number of genes involved in the response to DNA damage (SOS response), including recA and lexA. In the presence of single-stranded DNA, RecA interacts with LexA causing an autocatalytic cleavage which disrupts the DNA-binding part of LexA, leading to derepression of the SOS regulon and eventually DNA repair. The protein is LexA repressor of Geobacter metallireducens (strain ATCC 53774 / DSM 7210 / GS-15).